Here is a 193-residue protein sequence, read N- to C-terminus: V-type sodium ATPase subunit E (193 aa).

This sequence belongs to the V-ATPase E subunit family. The N-terminus is blocked.

Functionally, involved in ATP-driven sodium extrusion. This is V-type sodium ATPase subunit E (ntpE) from Enterococcus hirae (strain ATCC 9790 / DSM 20160 / JCM 8729 / LMG 6399 / NBRC 3181 / NCIMB 6459 / NCDO 1258 / NCTC 12367 / WDCM 00089 / R).